Here is a 152-residue protein sequence, read N- to C-terminus: Large ribosomal subunit protein uL15 (152 aa).

The interval 1–57 (MTSTLNTLKSNSGSRKKKLRKGRGIAAGQGASCGFGMRGQKSRSGRPTRPGFEGGQM) is disordered. Basic residues predominate over residues 14–23 (SRKKKLRKGR). Residues 25-37 (IAAGQGASCGFGM) are compositionally biased toward gly residues.

The protein belongs to the universal ribosomal protein uL15 family. Part of the 50S ribosomal subunit.

In terms of biological role, binds to the 23S rRNA. The protein is Large ribosomal subunit protein uL15 of Prochlorococcus marinus (strain MIT 9301).